Reading from the N-terminus, the 168-residue chain is Photosystem I assembly protein Ycf3 (168 aa).

3 TPR repeats span residues 35–68 (AFTY…EIDP), 72–105 (SYIL…NPFL), and 120–153 (GEQA…TPGN).

This sequence belongs to the Ycf3 family.

It is found in the plastid. Its subcellular location is the chloroplast thylakoid membrane. Its function is as follows. Essential for the assembly of the photosystem I (PSI) complex. May act as a chaperone-like factor to guide the assembly of the PSI subunits. In Buxus microphylla (Littleleaf boxwood), this protein is Photosystem I assembly protein Ycf3.